The chain runs to 286 residues: Pyridoxal kinase PdxY (286 aa).

Substrate-binding positions include Ser-9 and 44 to 45 (TQ). The ATP site is built by Asp-111, Glu-148, and Lys-181. Residue Asp-222 participates in substrate binding.

The protein belongs to the pyridoxine kinase family. PdxY subfamily. As to quaternary structure, homodimer. It depends on Mg(2+) as a cofactor.

It catalyses the reaction pyridoxal + ATP = pyridoxal 5'-phosphate + ADP + H(+). The protein operates within cofactor metabolism; pyridoxal 5'-phosphate salvage; pyridoxal 5'-phosphate from pyridoxal: step 1/1. In terms of biological role, pyridoxal kinase involved in the salvage pathway of pyridoxal 5'-phosphate (PLP). Catalyzes the phosphorylation of pyridoxal to PLP. The sequence is that of Pyridoxal kinase PdxY from Histophilus somni (strain 129Pt) (Haemophilus somnus).